The sequence spans 945 residues: Isoleucine--tRNA ligase (945 aa).

A 'HIGH' region motif is present at residues 66-76 (PYANGDIHLGH). Glu-581 contributes to the L-isoleucyl-5'-AMP binding site. A 'KMSKS' region motif is present at residues 622 to 626 (KMSKS). Lys-625 is an ATP binding site. Residues Cys-908, Cys-911, Cys-928, and Cys-931 each coordinate Zn(2+).

The protein belongs to the class-I aminoacyl-tRNA synthetase family. IleS type 1 subfamily. In terms of assembly, monomer. Requires Zn(2+) as cofactor.

It localises to the cytoplasm. The catalysed reaction is tRNA(Ile) + L-isoleucine + ATP = L-isoleucyl-tRNA(Ile) + AMP + diphosphate. Functionally, catalyzes the attachment of isoleucine to tRNA(Ile). As IleRS can inadvertently accommodate and process structurally similar amino acids such as valine, to avoid such errors it has two additional distinct tRNA(Ile)-dependent editing activities. One activity is designated as 'pretransfer' editing and involves the hydrolysis of activated Val-AMP. The other activity is designated 'posttransfer' editing and involves deacylation of mischarged Val-tRNA(Ile). The sequence is that of Isoleucine--tRNA ligase from Burkholderia vietnamiensis (strain G4 / LMG 22486) (Burkholderia cepacia (strain R1808)).